The following is a 900-amino-acid chain: Translation initiation factor IF-2 (900 aa).

Positions 48 to 310 (HLNRDRGNAP…KPSSLQQSFN (263 aa)) are disordered. Residues 68-82 (STLNVPSTGGKSKSV) show a composition bias toward polar residues. Composition is skewed to basic and acidic residues over residues 85–98 (EVRKTRTYVKRDPI) and 108–164 (QARR…KEKV). A compositionally biased stretch (polar residues) spans 165 to 176 (TNQQNENMTKPA). The segment covering 177 to 237 (QSEKAKREAE…SATKPEESAD (61 aa)) has biased composition (basic and acidic residues). The span at 263-277 (TRTRAAKVTKQKKGN) shows a compositional bias: basic residues. The span at 278–291 (RQSESKADREEARA) shows a compositional bias: basic and acidic residues. The 170-residue stretch at 399–568 (FRAPVVTIMG…LLQAEVLELK (170 aa)) folds into the tr-type G domain. The interval 408–415 (GHVDHGKT) is G1. Position 408–415 (408–415 (GHVDHGKT)) interacts with GTP. The interval 433 to 437 (GITQH) is G2. The interval 454–457 (DTPG) is G3. Residues 454-458 (DTPGH) and 508-511 (NKID) each bind GTP. The interval 508-511 (NKID) is G4. Residues 544–546 (SAK) form a G5 region.

The protein belongs to the TRAFAC class translation factor GTPase superfamily. Classic translation factor GTPase family. IF-2 subfamily.

It localises to the cytoplasm. Its function is as follows. One of the essential components for the initiation of protein synthesis. Protects formylmethionyl-tRNA from spontaneous hydrolysis and promotes its binding to the 30S ribosomal subunits. Also involved in the hydrolysis of GTP during the formation of the 70S ribosomal complex. The protein is Translation initiation factor IF-2 of Pectobacterium atrosepticum (strain SCRI 1043 / ATCC BAA-672) (Erwinia carotovora subsp. atroseptica).